We begin with the raw amino-acid sequence, 151 residues long: Mating pheromone 3 (151 aa).

An N-terminal signal peptide occupies residues 1 to 16; it reads MKAIFIILAILMVTQA. A propeptide spanning residues 17–52 is cleaved from the precursor; it reads FKMTSKVNTKLQSQIQSKFQSKNKLASTFQTSSQLK.

The protein resides in the secreted. In terms of biological role, mating ciliate pheromones (or gamones) are diffusible extracellular communication signals that distinguish different intraspecific classes of cells commonly referred to as 'mating types'. They prepare the latter for conjugation by changing their cell surface properties. In Euplotoides octocarinatus (Freshwater ciliate), this protein is Mating pheromone 3 (PHR3).